Here is a 505-residue protein sequence, read N- to C-terminus: Maturase K (505 aa).

Belongs to the intron maturase 2 family. MatK subfamily.

It localises to the plastid. The protein resides in the chloroplast. Functionally, usually encoded in the trnK tRNA gene intron. Probably assists in splicing its own and other chloroplast group II introns. The chain is Maturase K from Gomphrena haageana (Haage's globe-amaranth).